We begin with the raw amino-acid sequence, 378 residues long: Beta sliding clamp (378 aa).

Belongs to the beta sliding clamp family. In terms of assembly, forms a ring-shaped head-to-tail homodimer around DNA which binds and tethers DNA polymerases and other proteins to the DNA. The DNA replisome complex has a single clamp-loading complex (3 tau and 1 each of delta, delta', psi and chi subunits) which binds 3 Pol III cores (1 core on the leading strand and 2 on the lagging strand) each with a beta sliding clamp dimer. Additional proteins in the replisome are other copies of gamma, psi and chi, Ssb, DNA helicase and RNA primase.

It localises to the cytoplasm. Confers DNA tethering and processivity to DNA polymerases and other proteins. Acts as a clamp, forming a ring around DNA (a reaction catalyzed by the clamp-loading complex) which diffuses in an ATP-independent manner freely and bidirectionally along dsDNA. Initially characterized for its ability to contact the catalytic subunit of DNA polymerase III (Pol III), a complex, multichain enzyme responsible for most of the replicative synthesis in bacteria; Pol III exhibits 3'-5' exonuclease proofreading activity. The beta chain is required for initiation of replication as well as for processivity of DNA replication. This chain is Beta sliding clamp (dnaN), found in Streptococcus pneumoniae serotype 4 (strain ATCC BAA-334 / TIGR4).